A 51-amino-acid polypeptide reads, in one-letter code: Large ribosomal subunit protein bL33 (51 aa).

Residues 1–23 (MREKIKLESSAGTGHFYTTTKNK) are disordered. Polar residues predominate over residues 10-20 (SAGTGHFYTTT).

Belongs to the bacterial ribosomal protein bL33 family.

The chain is Large ribosomal subunit protein bL33 from Methylobacillus flagellatus (strain ATCC 51484 / DSM 6875 / VKM B-1610 / KT).